The sequence spans 315 residues: Prephenate dehydratase (315 aa).

Positions 3–190 constitute a Prephenate dehydratase domain; the sequence is RIAYLGPQGT…ARTRFVLVGR (188 aa). One can recognise an ACT domain in the interval 204 to 281; it reads SVALRLPNTP…EDVRYLGSWP (78 aa).

In terms of assembly, homodimer.

It catalyses the reaction prephenate + H(+) = 3-phenylpyruvate + CO2 + H2O. It functions in the pathway amino-acid biosynthesis; L-phenylalanine biosynthesis; phenylpyruvate from prephenate: step 1/1. This chain is Prephenate dehydratase (pheA), found in Mycobacterium sp. (strain KMS).